The following is a 549-amino-acid chain: mRNA-capping enzyme subunit beta (549 aa).

The residue at position 2 (serine 2) is an N-acetylserine. A Phosphoserine modification is found at serine 15. Positions 30–169 (LQKLSEAANG…QGNEGNIASN (140 aa)) are disordered. Residues 86–96 (DDEETDTDDEM) show a composition bias toward acidic residues. Serine 124 bears the Phosphoserine mark. The span at 135–157 (AKLEKPSDDSIHQNSKSDEEQRI) shows a compositional bias: basic and acidic residues. Lysine 223 functions as the N6-GMP-lysine intermediate in the catalytic mechanism.

It belongs to the fungal TPase family. Heterodimer. The mRNA-capping enzyme is composed of two separate chains alpha and beta, respectively a mRNA guanylyltransferase and an mRNA 5'-triphosphate monophosphatase. Requires Mg(2+) as cofactor.

The protein resides in the nucleus. The catalysed reaction is a 5'-end triphospho-ribonucleoside in mRNA + H2O = a 5'-end diphospho-ribonucleoside in mRNA + phosphate + H(+). Functionally, first step of mRNA capping. Converts the 5'-triphosphate end of a nascent mRNA chain into a diphosphate end. The protein is mRNA-capping enzyme subunit beta (CET1) of Saccharomyces cerevisiae (strain ATCC 204508 / S288c) (Baker's yeast).